The chain runs to 502 residues: Lysine--tRNA ligase (502 aa).

Glutamate 412 and glutamate 419 together coordinate Mg(2+).

Belongs to the class-II aminoacyl-tRNA synthetase family. As to quaternary structure, homodimer. It depends on Mg(2+) as a cofactor.

It is found in the cytoplasm. It catalyses the reaction tRNA(Lys) + L-lysine + ATP = L-lysyl-tRNA(Lys) + AMP + diphosphate. The protein is Lysine--tRNA ligase of Nitrosomonas europaea (strain ATCC 19718 / CIP 103999 / KCTC 2705 / NBRC 14298).